The sequence spans 492 residues: Transcript termination protein OPG145 (492 aa).

Positions 100–256 constitute a Helicase ATP-binding domain; that stretch reads MIELKRPLYI…NSIINIAKLS (157 aa). Position 113–120 (113–120) interacts with ATP; the sequence is LACGFGKT. Residues 206–209 carry the DEAH box motif; sequence DESH.

This sequence belongs to the helicase family. Poxviruses subfamily. As to quaternary structure, interacts with OPG087. Might be part of a transcription complex composed at least of OPG087, OPG110, and OPG145.

It is found in the virion. Its function is as follows. DNA helicase which seems to act as a postreplicative transcription termination factor. Involved in ATP-dependent release of nascent RNA. Forms a stable complex with single-stranded DNA, and to a lesser extent RNA. The protein is Transcript termination protein OPG145 (OPG145) of Cynomys gunnisoni (Gunnison's prairie dog).